A 77-amino-acid polypeptide reads, in one-letter code: uncharacterized protein (77 aa).

This is an uncharacterized protein from Bacillus licheniformis.